The primary structure comprises 375 residues: Sperm microtubule associated protein 2 (375 aa).

Residues 1–78 are disordered; that stretch reads MGELGEHRAS…MAGEELPETS (78 aa). Residues 59 to 75 are compositionally biased toward acidic residues; it reads EPEEEIPPEEMAGEELP. 7 THEG repeats span residues 110 to 129, 176 to 195, 214 to 233, 250 to 269, 282 to 301, 318 to 337, and 352 to 371; these read AKGR…PKTN, TITV…PKRF, STLE…PKVR, AAQM…PRPP, PKPY…PKAL, VTKN…PKIR, and ASLV…PKYI. Phosphoserine is present on Ser287.

Interacts with CCT5. As to expression, testis specific (at protein level). Specifically expressed in spermatids; Sertoli cells maintain the level of expression in spermatids. If isolated spermatids are cultivated for 16 hours alone, the expression of THEG is down-regulated. May require signals from Sertoli cells to initiate changes in its gene expression through spermatogenesis.

It is found in the nucleus. In terms of biological role, may be involved (but not essential) in spermatogenesis. The chain is Sperm microtubule associated protein 2 from Mus musculus (Mouse).